Consider the following 327-residue polypeptide: Endo-1,4-beta-xylanase A (327 aa).

The region spanning A1 to T323 is the GH10 domain. A disulfide bridge connects residues C81 and C123. N101 is a glycosylation site (N-linked (GlcNAc...) asparagine). E131 (proton donor) is an active-site residue. E245 (nucleophile) is an active-site residue. A disulfide bridge links C273 with C279.

The protein belongs to the glycosyl hydrolase 10 (cellulase F) family. As to quaternary structure, monomer.

It localises to the secreted. The protein resides in the extracellular space. The enzyme catalyses Endohydrolysis of (1-&gt;4)-beta-D-xylosidic linkages in xylans.. It functions in the pathway glycan degradation; xylan degradation. Catalyzes the hydrolysis of the internal glycosidic bonds in heteroxylans, releasing mainly xylobiose and xylotriose. Most active on oat-spelt xylan. The polypeptide is Endo-1,4-beta-xylanase A (Fusarium oxysporum f. sp. lycopersici (strain 4287 / CBS 123668 / FGSC 9935 / NRRL 34936) (Fusarium vascular wilt of tomato)).